A 254-amino-acid chain; its full sequence is Alcohol dehydrogenase (254 aa).

10 to 33 contributes to the NAD(+) binding site; that stretch reads FVAGLGGIGLDTSRELVKRNLKNL. Ser138 serves as a coordination point for substrate. The active-site Proton acceptor is Tyr151.

It belongs to the short-chain dehydrogenases/reductases (SDR) family. As to quaternary structure, homodimer.

The catalysed reaction is a primary alcohol + NAD(+) = an aldehyde + NADH + H(+). The enzyme catalyses a secondary alcohol + NAD(+) = a ketone + NADH + H(+). This is Alcohol dehydrogenase (Adh) from Drosophila pseudoobscura pseudoobscura (Fruit fly).